A 619-amino-acid polypeptide reads, in one-letter code: Auxin efflux carrier component 7 (619 aa).

Topologically, residues 1-7 (MITWHDL) are extracellular. Residues 8–28 (YTVLTAVIPLYVAMILAYGSV) form a helical membrane-spanning segment. The Cytoplasmic portion of the chain corresponds to 29-38 (RWWKIFSPDQ). The helical transmembrane segment at 39-59 (CSGINRFVAIFAVPLLSFHFI) threads the bilayer. Val51 is a (indol-3-yl)acetate binding site. Topologically, residues 60–71 (SSNNPYAMNLRF) are extracellular. Residues 72 to 92 (IAADTLQKLIMLTLLIIWANF) form a helical membrane-spanning segment. Residues 93 to 101 (TRSGSLEWS) lie on the Cytoplasmic side of the membrane. A helical membrane pass occupies residues 102-122 (ITIFSLSTLPNTLVMGIPLLI). Residues Asn112 and Leu114 each contribute to the (indol-3-yl)acetate site. Over 123-131 (AMYGEYSGS) the chain is Extracellular. The chain crosses the membrane as a helical span at residues 132 to 152 (LMVQIVVLQCIIWYTLLLFLF). Position 145 (Tyr145) interacts with (indol-3-yl)acetate. Residues 153 to 479 (EYRGAKILIM…LIRNPNTYSS (327 aa)) lie on the Cytoplasmic side of the membrane. Phosphoserine is present on residues Ser229, Ser246, and Ser286. The interval 306–340 (GAPGSYPAPNPEFSTGNKTGSKAPKENHHHVGKSN) is disordered. Thr320 is modified (phosphothreonine). Phosphoserine is present on Ser357. The interval 393-413 (HTQNGENKAGPMNGDYGGEEE) is disordered. Residues 480 to 500 (LIGLIWALVAFRWDVAMPKII) form a helical membrane-spanning segment. At 501-503 (QQS) the chain is on the extracellular side. Residues 504–524 (ISILSDAGLGMAMFSLGLFMA) traverse the membrane as a helical segment. Residues 525–538 (LQPKLIACGNSTAT) lie on the Cytoplasmic side of the membrane. A helical transmembrane segment spans residues 539-559 (FAMAVRFFTGPAVMAVAAMAI). The Extracellular segment spans residues 560–564 (GLRGD). The chain crosses the membrane as a helical span at residues 565–585 (LLRVAIVQAALPQGIVPFVFA). (indol-3-yl)acetate contacts are provided by Ile579 and Val580. The Cytoplasmic segment spans residues 586 to 598 (KEYNVHPAILSTG). Residues 599–619 (VIFGMLIALPITLVYYILLGL) traverse the membrane as a helical segment.

The protein belongs to the auxin efflux carrier (TC 2.A.69.1) family. As to quaternary structure, homodimer.

Its subcellular location is the cell membrane. Its function is as follows. Acts as a component of the auxin efflux carrier. Mediates the initial auxin gradient which contributes to the establishment of the apical-basal axis in early embryogenesis. Together with PIN3 and PIN4, involved in the connective auxin transport (CAT) that ensures communication across the shoot system, and modulates strigolactone-mediated shoot branching control. The abcb19 pin3 pin4 pin7 quadruple mutant exhibits an additive phenotype on strigolactone-mediated bud outgrowth responses and shoot branching control. The polypeptide is Auxin efflux carrier component 7 (Arabidopsis thaliana (Mouse-ear cress)).